Here is a 298-residue protein sequence, read N- to C-terminus: Ribosomal RNA small subunit methyltransferase H (298 aa).

S-adenosyl-L-methionine contacts are provided by residues 38-40 (GGH), Asp57, Phe84, Asp100, and Gln107.

This sequence belongs to the methyltransferase superfamily. RsmH family.

The protein resides in the cytoplasm. The catalysed reaction is cytidine(1402) in 16S rRNA + S-adenosyl-L-methionine = N(4)-methylcytidine(1402) in 16S rRNA + S-adenosyl-L-homocysteine + H(+). Specifically methylates the N4 position of cytidine in position 1402 (C1402) of 16S rRNA. The chain is Ribosomal RNA small subunit methyltransferase H from Acaryochloris marina (strain MBIC 11017).